A 236-amino-acid polypeptide reads, in one-letter code: Ribosomal RNA small subunit methyltransferase G (236 aa).

Residues G80, A131 to E132, and R148 each bind S-adenosyl-L-methionine.

This sequence belongs to the methyltransferase superfamily. RNA methyltransferase RsmG family.

It is found in the cytoplasm. In terms of biological role, specifically methylates the N7 position of a guanine in 16S rRNA. The protein is Ribosomal RNA small subunit methyltransferase G of Ureaplasma parvum serovar 3 (strain ATCC 27815 / 27 / NCTC 11736).